Consider the following 473-residue polypeptide: Ribulose bisphosphate carboxylase large chain (473 aa).

Residues Asn-116 and Thr-166 each contribute to the substrate site. The active-site Proton acceptor is Lys-168. Lys-170 is a substrate binding site. Mg(2+) is bound by residues Lys-194, Asp-196, and Glu-197. At Lys-194 the chain carries N6-carboxylysine. His-287 (proton acceptor) is an active-site residue. The substrate site is built by Arg-288, His-320, and Ser-372.

It belongs to the RuBisCO large chain family. Type I subfamily. In terms of assembly, heterohexadecamer of 8 large chains and 8 small chains. Mg(2+) serves as cofactor.

The enzyme catalyses 2 (2R)-3-phosphoglycerate + 2 H(+) = D-ribulose 1,5-bisphosphate + CO2 + H2O. The catalysed reaction is D-ribulose 1,5-bisphosphate + O2 = 2-phosphoglycolate + (2R)-3-phosphoglycerate + 2 H(+). RuBisCO catalyzes two reactions: the carboxylation of D-ribulose 1,5-bisphosphate, the primary event in carbon dioxide fixation, as well as the oxidative fragmentation of the pentose substrate. Both reactions occur simultaneously and in competition at the same active site. The polypeptide is Ribulose bisphosphate carboxylase large chain (Nitrosomonas eutropha (strain DSM 101675 / C91 / Nm57)).